The sequence spans 198 residues: 7-methyl-GTP pyrophosphatase (198 aa).

The Proton acceptor role is filled by Asp75.

It belongs to the Maf family. YceF subfamily. A divalent metal cation serves as cofactor.

It localises to the cytoplasm. It catalyses the reaction N(7)-methyl-GTP + H2O = N(7)-methyl-GMP + diphosphate + H(+). Functionally, nucleoside triphosphate pyrophosphatase that hydrolyzes 7-methyl-GTP (m(7)GTP). May have a dual role in cell division arrest and in preventing the incorporation of modified nucleotides into cellular nucleic acids. The chain is 7-methyl-GTP pyrophosphatase from Bartonella henselae (strain ATCC 49882 / DSM 28221 / CCUG 30454 / Houston 1) (Rochalimaea henselae).